A 312-amino-acid polypeptide reads, in one-letter code: Pimeloyl-[acyl-carrier protein] methyl ester esterase (312 aa).

One can recognise an AB hydrolase-1 domain in the interval 17–241 (VYLIHGWGAN…KAAHAPFLSH (225 aa)). Substrate contacts are provided by residues Trp23, 83-84 (SL), and 145-149 (FLQLQ). The Nucleophile role is filled by Ser83. Residues Asp207 and His235 contribute to the active site. His235 lines the substrate pocket.

Belongs to the AB hydrolase superfamily. Carboxylesterase BioH family. Monomer.

The protein localises to the cytoplasm. The enzyme catalyses 6-carboxyhexanoyl-[ACP] methyl ester + H2O = 6-carboxyhexanoyl-[ACP] + methanol + H(+). The protein operates within cofactor biosynthesis; biotin biosynthesis. Functionally, the physiological role of BioH is to remove the methyl group introduced by BioC when the pimeloyl moiety is complete. It allows to synthesize pimeloyl-ACP via the fatty acid synthetic pathway through the hydrolysis of the ester bonds of pimeloyl-ACP esters. This chain is Pimeloyl-[acyl-carrier protein] methyl ester esterase, found in Neisseria meningitidis serogroup A / serotype 4A (strain DSM 15465 / Z2491).